A 249-amino-acid polypeptide reads, in one-letter code: tRNA pseudouridine synthase A (249 aa).

The active-site Nucleophile is D52. Substrate is bound at residue Y110.

Belongs to the tRNA pseudouridine synthase TruA family. Homodimer.

It carries out the reaction uridine(38/39/40) in tRNA = pseudouridine(38/39/40) in tRNA. In terms of biological role, formation of pseudouridine at positions 38, 39 and 40 in the anticodon stem and loop of transfer RNAs. The chain is tRNA pseudouridine synthase A from Syntrophomonas wolfei subsp. wolfei (strain DSM 2245B / Goettingen).